The chain runs to 288 residues: MELIIISGRSGSGKSVALRALEDVGYYCVDNLPLPLIPELAGFLSNSGRSAVVSLDIRNIPENPESIEALLEQLSKLTIQTKIIFLDCERNTLIRRYSDTRRLHPLSNKDLSLESAIDLENTLLEPLYQQANYIIDTTNISSHELAENLRGILRGSTDKALKIVFESFGFKYGLPADADYVFDVRFLPNPHWNPELRPMTGLEQPVIDFLERQTEVHNFIYQTRNYLEMWLPMLEKNNRSYLTIAIGCTGGKHRSVFIAEQLAKYFQSRDKDVQIRHRSLEKHHKKIS.

Residue 8 to 15 coordinates ATP; that stretch reads GRSGSGKS. Residue 56 to 59 coordinates GTP; it reads DIRN.

It belongs to the RapZ-like family.

Its function is as follows. Displays ATPase and GTPase activities. This is Nucleotide-binding protein APP7_0339 from Actinobacillus pleuropneumoniae serotype 7 (strain AP76).